A 102-amino-acid polypeptide reads, in one-letter code: Small integral membrane protein 29 (102 aa).

A glycan (N-linked (GlcNAc...) asparagine) is linked at asparagine 3. A helical transmembrane segment spans residues 21–41; sequence VLGPFFLITLVGVVVAVVMYV.

The protein localises to the membrane. The sequence is that of Small integral membrane protein 29 from Mus musculus (Mouse).